A 289-amino-acid chain; its full sequence is Acetyl-coenzyme A carboxylase carboxyl transferase subunit beta (289 aa).

One can recognise a CoA carboxyltransferase N-terminal domain in the interval 28-289 (VMTKCPKCKK…QGGEMAVWQS (262 aa)). Residues Cys32, Cys35, Cys51, and Cys54 each coordinate Zn(2+). The C4-type zinc finger occupies 32-54 (CPKCKKIMYTKEVLKNLKVCVNC).

It belongs to the AccD/PCCB family. As to quaternary structure, acetyl-CoA carboxylase is a heterohexamer composed of biotin carboxyl carrier protein (AccB), biotin carboxylase (AccC) and two subunits each of ACCase subunit alpha (AccA) and ACCase subunit beta (AccD). Requires Zn(2+) as cofactor.

It is found in the cytoplasm. It carries out the reaction N(6)-carboxybiotinyl-L-lysyl-[protein] + acetyl-CoA = N(6)-biotinyl-L-lysyl-[protein] + malonyl-CoA. The protein operates within lipid metabolism; malonyl-CoA biosynthesis; malonyl-CoA from acetyl-CoA: step 1/1. Its function is as follows. Component of the acetyl coenzyme A carboxylase (ACC) complex. Biotin carboxylase (BC) catalyzes the carboxylation of biotin on its carrier protein (BCCP) and then the CO(2) group is transferred by the transcarboxylase to acetyl-CoA to form malonyl-CoA. The chain is Acetyl-coenzyme A carboxylase carboxyl transferase subunit beta from Bacillus thuringiensis (strain Al Hakam).